The chain runs to 107 residues: Inner membrane protein YiaW (107 aa).

The Cytoplasmic segment spans residues 1 to 6 (MFLDYF). The chain crosses the membrane as a helical span at residues 7–29 (ALGVLIFVFLVIFYGIIILHDIP). The Periplasmic portion of the chain corresponds to 30–43 (YLIAKKRNHPHADA). Residues 44–66 (IHVAGWVSLFTLHVIWPFLWIWA) form a helical membrane-spanning segment. Over 67–107 (TLYRPERGWGMQSHDSSVMQLQQRIAGLEKQLADIKSSSAE) the chain is Cytoplasmic.

To E.coli YibI.

It localises to the cell inner membrane. The sequence is that of Inner membrane protein YiaW (yiaW) from Escherichia coli O157:H7.